The chain runs to 182 residues: Isopentenyl-diphosphate Delta-isomerase (182 aa).

Mn(2+)-binding residues include His25 and His32. The 135-residue stretch at 30–164 folds into the Nudix hydrolase domain; the sequence is LLHLAFSSWL…PWAFSPWMVM (135 aa). Cys67 is a catalytic residue. His69 lines the Mn(2+) pocket. Glu87 serves as a coordination point for Mg(2+). Mn(2+)-binding residues include Glu114 and Glu116. Residue Glu116 is part of the active site.

The protein belongs to the IPP isomerase type 1 family. Homodimer. Requires Mg(2+) as cofactor. The cofactor is Mn(2+).

Its subcellular location is the cytoplasm. It carries out the reaction isopentenyl diphosphate = dimethylallyl diphosphate. Its pathway is isoprenoid biosynthesis; dimethylallyl diphosphate biosynthesis; dimethylallyl diphosphate from isopentenyl diphosphate: step 1/1. In terms of biological role, catalyzes the 1,3-allylic rearrangement of the homoallylic substrate isopentenyl (IPP) to its highly electrophilic allylic isomer, dimethylallyl diphosphate (DMAPP). In Escherichia coli O7:K1 (strain IAI39 / ExPEC), this protein is Isopentenyl-diphosphate Delta-isomerase.